The sequence spans 408 residues: Glucose-1-phosphate adenylyltransferase (408 aa).

Alpha-D-glucose 1-phosphate is bound by residues Tyr100, Gly165, 180–181 (EK), and Ser198.

It belongs to the bacterial/plant glucose-1-phosphate adenylyltransferase family. In terms of assembly, homotetramer.

It catalyses the reaction alpha-D-glucose 1-phosphate + ATP + H(+) = ADP-alpha-D-glucose + diphosphate. The protein operates within glycan biosynthesis; glycogen biosynthesis. In terms of biological role, involved in the biosynthesis of ADP-glucose, a building block required for the elongation reactions to produce glycogen. Catalyzes the reaction between ATP and alpha-D-glucose 1-phosphate (G1P) to produce pyrophosphate and ADP-Glc. The sequence is that of Glucose-1-phosphate adenylyltransferase from Cutibacterium acnes (strain DSM 16379 / KPA171202) (Propionibacterium acnes).